A 365-amino-acid polypeptide reads, in one-letter code: Outer membrane porin protein LC (365 aa).

The first 23 residues, Met-1–Ala-23, serve as a signal peptide directing secretion.

The protein belongs to the Gram-negative porin family. In terms of assembly, homotrimer.

It is found in the host cell outer membrane. In terms of biological role, forms pores that allow passive diffusion of small molecules across the host cell outer membrane. This chain is Outer membrane porin protein LC (LC), found in Enterobacteria phage PA-2 (Bacteriophage PA-2).